Reading from the N-terminus, the 124-residue chain is Small ribosomal subunit protein uS12 (124 aa).

A 3-methylthioaspartic acid modification is found at Asp-89.

This sequence belongs to the universal ribosomal protein uS12 family. Part of the 30S ribosomal subunit. Contacts proteins S8 and S17. May interact with IF1 in the 30S initiation complex.

In terms of biological role, with S4 and S5 plays an important role in translational accuracy. Functionally, interacts with and stabilizes bases of the 16S rRNA that are involved in tRNA selection in the A site and with the mRNA backbone. Located at the interface of the 30S and 50S subunits, it traverses the body of the 30S subunit contacting proteins on the other side and probably holding the rRNA structure together. The combined cluster of proteins S8, S12 and S17 appears to hold together the shoulder and platform of the 30S subunit. The sequence is that of Small ribosomal subunit protein uS12 from Buchnera aphidicola subsp. Acyrthosiphon pisum (strain 5A).